We begin with the raw amino-acid sequence, 1940 residues long: Myosin-3 (1940 aa).

The Myosin N-terminal SH3-like domain occupies 33–82 (DAKTYCFVVDSKEEYVKGKIKSSQDGKVTVETEDSRTLVVKPEDVYAMNP). The region spanning 86 to 779 (DKIEDMAMLT…LLGTLEEMRD (694 aa)) is the Myosin motor domain. Residue Lys130 is modified to N6,N6,N6-trimethyllysine. Residue 179 to 186 (GESGAGKT) participates in ATP binding. 2 actin-binding regions span residues 656 to 678 (LNKL…IPNE) and 758 to 772 (KFGH…GLLG). In terms of domain architecture, IQ spans 782-811 (LAKLITRTQAVCRGFLMRVEFQKMMQRRES). A coiled-coil region spans residues 841 to 1928 (LKSAETEKEM…NKLRAKTRDF (1088 aa)). A disordered region spans residues 1260 to 1289 (ARGKNEEMQRSLSELTTQKSRLQTEAGELS). A compositionally biased stretch (polar residues) spans 1269 to 1282 (RSLSELTTQKSRLQ).

Belongs to the TRAFAC class myosin-kinesin ATPase superfamily. Myosin family. As to quaternary structure, muscle myosin is a hexameric protein that consists of 2 heavy chain subunits (MHC), 2 alkali light chain subunits (MLC) and 2 regulatory light chain subunits (MLC-2).

The protein localises to the cytoplasm. It is found in the myofibril. Functionally, muscle contraction. This chain is Myosin-3 (Myh3), found in Mus musculus (Mouse).